A 178-amino-acid chain; its full sequence is Actin-related protein 2/3 complex subunit 3 (178 aa).

A Glycyl lysine isopeptide (Lys-Gly) (interchain with G-Cter in ubiquitin) cross-link involves residue Lys-29.

The protein belongs to the ARPC3 family. In terms of assembly, component of the Arp2/3 complex composed of ARP2, ARP3, ARC40/p41-ARC, ARC35/p34-ARC, ARC18/p21-ARC, ARC19/p20-ARC and ARC16/p16-ARC.

The protein resides in the cytoplasm. It is found in the cytoskeleton. In terms of biological role, functions as a component of the Arp2/3 complex which is involved in regulation of actin polymerization and together with an activating nucleation-promoting factor (NPF) mediates the formation of branched actin networks. The protein is Actin-related protein 2/3 complex subunit 3 (ARC18) of Saccharomyces cerevisiae (strain ATCC 204508 / S288c) (Baker's yeast).